Consider the following 335-residue polypeptide: Beta-ketoacyl-[acyl-carrier-protein] synthase III (335 aa).

Residues cysteine 116 and histidine 256 contribute to the active site. The interval 257-261 (QANLR) is ACP-binding. The active site involves asparagine 286.

Belongs to the thiolase-like superfamily. FabH family. As to quaternary structure, homodimer.

The protein localises to the cytoplasm. The enzyme catalyses malonyl-[ACP] + acetyl-CoA + H(+) = 3-oxobutanoyl-[ACP] + CO2 + CoA. It participates in lipid metabolism; fatty acid biosynthesis. In terms of biological role, catalyzes the condensation reaction of fatty acid synthesis by the addition to an acyl acceptor of two carbons from malonyl-ACP. Catalyzes the first condensation reaction which initiates fatty acid synthesis and may therefore play a role in governing the total rate of fatty acid production. Possesses both acetoacetyl-ACP synthase and acetyl transacylase activities. Its substrate specificity determines the biosynthesis of branched-chain and/or straight-chain of fatty acids. The sequence is that of Beta-ketoacyl-[acyl-carrier-protein] synthase III from Porphyromonas gingivalis (strain ATCC 33277 / DSM 20709 / CIP 103683 / JCM 12257 / NCTC 11834 / 2561).